Reading from the N-terminus, the 220-residue chain is MILSPARTRIKICGLTRPGDVDVAVAAGADAIGLVFYPRSPRHVSLALASDLARRLPPFVTPVGLFVNASPEDVERACEQIPNLLLQFHGDETPAQCEASGRPYLRAARMDPGFDLLNFARSYTSAQAILLDAHVEGYGGGGKVFDWSLIPSDVPRPVVLSGGLNPANVTDGVLRVRPWAVDVSSGVESAKGIKDAVLMRQFCEAVRDADARSIDASSGY.

The protein belongs to the TrpF family.

It catalyses the reaction N-(5-phospho-beta-D-ribosyl)anthranilate = 1-(2-carboxyphenylamino)-1-deoxy-D-ribulose 5-phosphate. It functions in the pathway amino-acid biosynthesis; L-tryptophan biosynthesis; L-tryptophan from chorismate: step 3/5. In Leptothrix cholodnii (strain ATCC 51168 / LMG 8142 / SP-6) (Leptothrix discophora (strain SP-6)), this protein is N-(5'-phosphoribosyl)anthranilate isomerase.